The following is a 430-amino-acid chain: Spermatogenic leucine zipper protein 1 (430 aa).

Residues 1–25 are disordered; the sequence is MASSAKSAEMPTISKTVNPTPDPHQ. The stretch at 62-102 forms a coiled coil; that stretch reads EQQTAQKFNNLLKEIKDILKNMAGFEEKITEAKELFEETNI. Position 107 is a phosphoserine (Ser107). The tract at residues 166–177 is helix-loop-helix motif; the sequence is KINEMLSTNLPV. A basic motif region spans residues 178 to 244; it reads SLAPEKEDNE…NVQEETMKIR (67 aa). Coiled coils occupy residues 214–269 and 316–351; these read LEEK…KLIK and SLQLMAALLENECQILQQRVEILKELHHQKQGTLQE. The residue at position 258 (Ser258) is a Phosphoserine. A leucine-zipper region spans residues 303 to 324; sequence LEEQVKKLSHDTYSLQLMAALL.

Interacts with PPP1CC isoform gamma-2. Phosphorylated by MAPK1/ERK2 and MAPK3/ERK1. Specifically and strongly expressed in the testis. Expressed in several tumor cell lines.

The protein localises to the cytoplasm. It localises to the nucleus. Transcription factor that binds to the DNA sequence 5'-CANNTG-3'(E box) and the G-box motif. May play an important role in the regulation of cell proliferation and differentiation during spermatogenesis. The chain is Spermatogenic leucine zipper protein 1 (SPZ1) from Homo sapiens (Human).